A 380-amino-acid polypeptide reads, in one-letter code: MSHKTKSTTQERKAGKSSAPQRQVVSKSSLQKKVSKPTATAKLQKSKALHPRNAHNNGYDFAALVTAFPKLKAFVKPNPYGNLSIDFADPVAVKMLNAALLKFHYGVGHWDIPDGFLCPPIPGRADYIHHVADLLAVKKSSKKRIPKGPKVRVLDIGTGANVIYPLLGIQSYGWDFVGSDVDPLSIANAQQIFAGNSDIANKFSSRLQADSKHVFHGVIEANERFDLTLCNPPFHASLAEASEGTARKLKNLAANRAKSSQVMSPQVQPSGKVKPATDKNHGVLNFGGQKAELWCEGGELQFLRTMIEESHDFASQCLWFTTLVSKKENLNPAKALLAKIKAEEVKEIEMHQGNKITRVLAWTFLKPEQRELWVQYRDAQ.

2 disordered regions span residues 1 to 54 (MSHK…PRNA) and 260 to 279 (SQVMSPQVQPSGKVKPATDK). Residues 21 to 32 (QRQVVSKSSLQK) show a composition bias toward low complexity. The span at 44–53 (QKSKALHPRN) shows a compositional bias: basic residues. A compositionally biased stretch (low complexity) spans 260–270 (SQVMSPQVQPS).

This sequence belongs to the methyltransferase superfamily. METTL16/RlmF family.

Its subcellular location is the cytoplasm. The enzyme catalyses adenosine(1618) in 23S rRNA + S-adenosyl-L-methionine = N(6)-methyladenosine(1618) in 23S rRNA + S-adenosyl-L-homocysteine + H(+). Its function is as follows. Specifically methylates the adenine in position 1618 of 23S rRNA. The chain is Ribosomal RNA large subunit methyltransferase F from Shewanella pealeana (strain ATCC 700345 / ANG-SQ1).